Here is a 203-residue protein sequence, read N- to C-terminus: MKKQVLRIGVGGPVGSGKTALLRQLCLSLRDKYNMAVVTNDIYTREDAEFLTKNDALAADRIIGVETGGCPHTAIREDASMNLAAIDELQARHNDLDFVLVESGGDNLSATFSPELSDLTIYVIDVSAGDKIPRKGGPGITKSDLLIINKIDVANLVGASLEVMDADTKKMRGDKPFIFSNMKTQQGLADIISFIEKEGMLSL.

12–19 (GPVGSGKT) provides a ligand contact to GTP.

Belongs to the SIMIBI class G3E GTPase family. UreG subfamily. In terms of assembly, homodimer. UreD, UreF and UreG form a complex that acts as a GTP-hydrolysis-dependent molecular chaperone, activating the urease apoprotein by helping to assemble the nickel containing metallocenter of UreC. The UreE protein probably delivers the nickel.

The protein resides in the cytoplasm. Functionally, facilitates the functional incorporation of the urease nickel metallocenter. This process requires GTP hydrolysis, probably effectuated by UreG. The chain is Urease accessory protein UreG from Alteromonas mediterranea (strain DSM 17117 / CIP 110805 / LMG 28347 / Deep ecotype).